The following is a 297-amino-acid chain: Acetaldehyde dehydrogenase (297 aa).

NAD(+) is bound at residue 15–18; the sequence is SGSI. Cysteine 130 (acyl-thioester intermediate) is an active-site residue. NAD(+) contacts are provided by residues 162–170 and asparagine 272; that span reads SAGIATREN.

Belongs to the acetaldehyde dehydrogenase family.

It catalyses the reaction acetaldehyde + NAD(+) + CoA = acetyl-CoA + NADH + H(+). This Burkholderia thailandensis (strain ATCC 700388 / DSM 13276 / CCUG 48851 / CIP 106301 / E264) protein is Acetaldehyde dehydrogenase (mhpF).